Here is a 152-residue protein sequence, read N- to C-terminus: MKNKTQKNRILINKEVYSKEITKKFLKDITEKILSELNLNNVEISITLTDNERIREINKEWRGKDKPTDVLSFPQDETIGYKYRLLGDVIISLPYAKAQAEEIGLTLREEVLRLLVHGILHLLGYDHETNEEDAKIMFDLQDKIFDKLTCEL.

Zn(2+) contacts are provided by H117, H121, and H127.

This sequence belongs to the endoribonuclease YbeY family. It depends on Zn(2+) as a cofactor.

It localises to the cytoplasm. In terms of biological role, single strand-specific metallo-endoribonuclease involved in late-stage 70S ribosome quality control and in maturation of the 3' terminus of the 16S rRNA. This is Endoribonuclease YbeY from Sulfurihydrogenibium sp. (strain YO3AOP1).